We begin with the raw amino-acid sequence, 475 residues long: Stromelysin-1 (475 aa).

The N-terminal stretch at 1–17 (MKGLPVLLWLCTAVCSS) is a signal peptide. The propeptide at 18 to 97 (YPLHGSEEDA…PRCGVPDVGG (80 aa)) is activation peptide. Positions 88–95 (PRCGVPDV) match the Cysteine switch motif. Cys-90 provides a ligand contact to Zn(2+). N-linked (GlcNAc...) asparagine glycosylation occurs at Asn-118. Positions 122 and 156 each coordinate Ca(2+). His-166 and Asp-168 together coordinate Zn(2+). 4 residues coordinate Ca(2+): Asp-173, Gly-174, Gly-176, and Val-178. Position 181 (His-181) interacts with Zn(2+). Residues Gly-188, Asn-190, and Asp-192 each contribute to the Ca(2+) site. His-194 contacts Zn(2+). Ca(2+) is bound by residues Asp-196, Asp-197, and Glu-199. His-216 contacts Zn(2+). Residue Glu-217 is part of the active site. His-220 and His-226 together coordinate Zn(2+). 4 Hemopexin repeats span residues 285-334 (LPMC…WPSL), 335-381 (PSNM…GLPE), 383-431 (VQKI…FPGI), and 432-475 (GTKV…WFNC). Cys-288 and Cys-475 are joined by a disulfide. Asp-295 lines the Ca(2+) pocket. Residues Asp-387 and Asp-436 each contribute to the Ca(2+) site.

The protein belongs to the peptidase M10A family. It depends on Ca(2+) as a cofactor. Zn(2+) serves as cofactor.

The protein resides in the secreted. Its subcellular location is the extracellular space. The protein localises to the extracellular matrix. It catalyses the reaction Preferential cleavage where P1', P2' and P3' are hydrophobic residues.. Inhibited by a synthetic peptide corresponding to the inhibitory cysteine switch motif. Inhibited by ethylenediaminetetraacetic acid (EDTA), 1,10-pheanthroline, 2-mecaptoethanol, dithiothreitol and metalloproteinase inhibitor protein TIMP. Its function is as follows. Can degrade fibronectin, laminin, gelatins of type I, III, IV, and V; collagens III, IV, X, and IX, and cartilage proteoglycans. Activates procollagenase. Metalloproteinase with a rather broad substrate specificity that can degrade fibronectin, laminin, gelatins of type I, III, IV, and V; collagens III, IV, X, and IX, and cartilage proteoglycans. Activates different molecules including growth factors, plasminogen or other matrix metalloproteinases such as MMP9. Once released into the extracellular matrix (ECM), the inactive pro-enzyme is activated by the plasmin cascade signaling pathway. Also acts intracellularly. For example, in dopaminergic neurons, gets activated by the serine protease HTRA2 upon stress and plays a pivotal role in DA neuronal degeneration by mediating microglial activation and alpha-synuclein/SNCA cleavage. In addition, plays a role in immune response and possesses antiviral activity against various viruses. Mechanistically, translocates from the cytoplasm into the cell nucleus upon virus infection to influence NF-kappa-B activities. This is Stromelysin-1 (Mmp3) from Rattus norvegicus (Rat).